Here is a 104-residue protein sequence, read N- to C-terminus: Large ribosomal subunit protein uL24 (104 aa).

It belongs to the universal ribosomal protein uL24 family. In terms of assembly, part of the 50S ribosomal subunit.

Functionally, one of two assembly initiator proteins, it binds directly to the 5'-end of the 23S rRNA, where it nucleates assembly of the 50S subunit. Its function is as follows. One of the proteins that surrounds the polypeptide exit tunnel on the outside of the subunit. This is Large ribosomal subunit protein uL24 from Ectopseudomonas mendocina (strain ymp) (Pseudomonas mendocina).